The primary structure comprises 504 residues: Pentatricopeptide repeat-containing protein At1g09220, mitochondrial (504 aa).

The transit peptide at 1–87 directs the protein to the mitochondrion; sequence MFLFSSRRIT…FLFNPLLRCY (87 aa). PPR repeat units lie at residues 76–110, 120–156, 157–187, 188–222, 223–253, 255–289, 291–321, 324–358, 359–390, and 396–430; these read KLFLFNPLLRCYSLGETPLHAYFLYDQLQRLHFLS, DSFTYLFLLKASSNPRFPSLLLGIGLHGLTLKLGFES, HVYVQTALVGMYLVGGNMIDAHKVFDEMPER, NPVTWNVMITGLTNLGDFEKALCFLEKMPNRTVVS, WTTIIDGYARVDKPKEAILLFSRMVACDAIK, NEITILAILPAVWNLGDLKMCGSVHAYVGKRGFVP, DIRVTNSLIDAYAKCGCIQSAFKFFIEIPNG, NLVSWTTMISAFAIHGMGKEAVSMFKDMERLGLKP, NRVTMISVLNACSHGGLAEEEFLEFFNTMVNE, and DVKHYGCLVDMLRRKGRLEEAEKIALEIPIEEKAV. The segment at 431-504 is type E motif; degenerate; sequence VWRMLLGACS…AKLPGHSQVT (74 aa).

The protein belongs to the PPR family. PCMP-E subfamily.

The protein localises to the mitochondrion. This Arabidopsis thaliana (Mouse-ear cress) protein is Pentatricopeptide repeat-containing protein At1g09220, mitochondrial (PCMP-E25).